The chain runs to 387 residues: Na(+)/H(+)-K(+) antiporter GerN (387 aa).

Helical transmembrane passes span 29-49 (PSVL…LGWI), 54-74 (LLTQ…GLET), 87-107 (LAVA…SGLV), 114-134 (NAVF…VQTL), 149-169 (LGAA…AMSF), 175-195 (VNLT…ILIG), 219-239 (ALII…AGII), 263-283 (PIAY…NITF), 290-310 (IWFI…GCGF), 324-344 (IIGA…GTGL), and 347-367 (GLLA…TTMI).

This sequence belongs to the monovalent cation:proton antiporter 2 (CPA2) transporter (TC 2.A.37) family.

Its subcellular location is the membrane. Its function is as follows. Na(+)/H(+) antiporter that extrudes sodium in exchange for external protons. Can also use potassium as a coupling ion, without completely replacing H(+). This Na(+)/H(+)-K(+) antiport is much more rapid than Na(+)/H(+) antiport. Can also extrude lithium. Important for the inosine-dependent germination of spores. The polypeptide is Na(+)/H(+)-K(+) antiporter GerN (gerN) (Bacillus cereus).